Reading from the N-terminus, the 401-residue chain is Argininosuccinate synthase (401 aa).

Residues 7-15 (AYSGGLDTS) and Ala-34 contribute to the ATP site. L-citrulline is bound by residues Tyr-85 and Ser-90. An ATP-binding site is contributed by Gly-115. Thr-117, Asn-121, and Asp-122 together coordinate L-aspartate. Asn-121 serves as a coordination point for L-citrulline. The L-citrulline site is built by Arg-125, Ser-174, Ser-183, Glu-259, and Tyr-271.

The protein belongs to the argininosuccinate synthase family. Type 1 subfamily. As to quaternary structure, homotetramer.

It is found in the cytoplasm. The enzyme catalyses L-citrulline + L-aspartate + ATP = 2-(N(omega)-L-arginino)succinate + AMP + diphosphate + H(+). The protein operates within amino-acid biosynthesis; L-arginine biosynthesis; L-arginine from L-ornithine and carbamoyl phosphate: step 2/3. The polypeptide is Argininosuccinate synthase (Pelotomaculum thermopropionicum (strain DSM 13744 / JCM 10971 / SI)).